The chain runs to 230 residues: Enolase-phosphatase E1 (230 aa).

This sequence belongs to the HAD-like hydrolase superfamily. MasA/MtnC family. In terms of assembly, monomer. Mg(2+) is required as a cofactor.

It catalyses the reaction 5-methylsulfanyl-2,3-dioxopentyl phosphate + H2O = 1,2-dihydroxy-5-(methylsulfanyl)pent-1-en-3-one + phosphate. The protein operates within amino-acid biosynthesis; L-methionine biosynthesis via salvage pathway; L-methionine from S-methyl-5-thio-alpha-D-ribose 1-phosphate: step 3/6. It functions in the pathway amino-acid biosynthesis; L-methionine biosynthesis via salvage pathway; L-methionine from S-methyl-5-thio-alpha-D-ribose 1-phosphate: step 4/6. Functionally, bifunctional enzyme that catalyzes the enolization of 2,3-diketo-5-methylthiopentyl-1-phosphate (DK-MTP-1-P) into the intermediate 2-hydroxy-3-keto-5-methylthiopentenyl-1-phosphate (HK-MTPenyl-1-P), which is then dephosphorylated to form the acireductone 1,2-dihydroxy-3-keto-5-methylthiopentene (DHK-MTPene). In Marinobacter nauticus (strain ATCC 700491 / DSM 11845 / VT8) (Marinobacter aquaeolei), this protein is Enolase-phosphatase E1.